A 139-amino-acid chain; its full sequence is Actin-depolymerizing factor (139 aa).

The 135-residue stretch at 5 to 139 (SSGMAVDDEC…SMDIIKARAF (135 aa)) folds into the ADF-H domain.

It belongs to the actin-binding proteins ADF family. As to expression, preferentially in mature anther.

Its function is as follows. Actin-depolymerizing protein. Severs actin filaments (F-actin) and binds to actin monomers. This is Actin-depolymerizing factor from Lilium longiflorum (Trumpet lily).